Reading from the N-terminus, the 540-residue chain is GMP synthase [glutamine-hydrolyzing] (540 aa).

A Glutamine amidotransferase type-1 domain is found at 29 to 222 (KILIVDFGSQ…VRKVAGLTGD (194 aa)). Cys-106 acts as the Nucleophile in catalysis. Residues His-196 and Glu-198 contribute to the active site. In terms of domain architecture, GMPS ATP-PPase spans 223-415 (WTMRAFREEA…LGLPDVFVGR (193 aa)). Position 250-256 (250-256 (SGGVDSA)) interacts with ATP.

Homodimer.

It carries out the reaction XMP + L-glutamine + ATP + H2O = GMP + L-glutamate + AMP + diphosphate + 2 H(+). It participates in purine metabolism; GMP biosynthesis; GMP from XMP (L-Gln route): step 1/1. Its function is as follows. Catalyzes the synthesis of GMP from XMP. The protein is GMP synthase [glutamine-hydrolyzing] of Rhodopseudomonas palustris (strain ATCC BAA-98 / CGA009).